Reading from the N-terminus, the 556-residue chain is MKTDIEIAQSIELKPIVDVVEKLGISYDDLELYGKYKAKLSFDKIRAVESNPVGKLILVTAINPTPAGEGKSTLTIGLADALNKIGKKTMIAIREPSLGPVMGIKGGAAGGGYAQVLPMEDINLHFTGDMHAITTANNALSALIDNHLHQGNELGIDQRRILWKRVVDLNDRALRHVTVGLGGPLNGIPREDGFDITVASEIMAILCLATDIEDLKRRLANIVIGYRYDRTPVSVGDLQVEGALALILKDAIKPNLVQTIYGTPAFVHGGPFANIAHGCNSVLATTTALHLADYTVTEAGFGADLGAEKFLDIKTPNLPTSPDAVVIVATLRALKMNGGVAKDALTEENVEAVRAGFANLKRHVENIRKFGIPAVVAINEFVSDTEAEIAVLKELCASIDVPVELASVWADGAEGGVALAETVVKTIAENPANYKRLYDNDLSVQEKIEKIVTEIYRGSKVNFEKKAQTQIAQIVQNGWDKLPICMAKTQYSFSDNPNALGAPENFEITIRELVPKLGAGFIVALTGDVMTMPGLPKRPAALNMDVESDGTVLGLF.

Residue 65 to 72 (TPAGEGKS) coordinates ATP.

Belongs to the formate--tetrahydrofolate ligase family.

It catalyses the reaction (6S)-5,6,7,8-tetrahydrofolate + formate + ATP = (6R)-10-formyltetrahydrofolate + ADP + phosphate. It functions in the pathway one-carbon metabolism; tetrahydrofolate interconversion. The polypeptide is Formate--tetrahydrofolate ligase (Streptococcus pneumoniae (strain 70585)).